The primary structure comprises 107 residues: MKFMAENRLTLTKGTAKDIIERFYTRHGIETLEGFDGMFVTQTLEQEDFDEVKILTVWKSKQAFTDWLKSDVFKAAHKHVRSKNEDESSPIINNKVITYDIGYSYMK.

One can recognise an ABM domain in the interval 3-92; that stretch reads FMAENRLTLT…KNEDESSPII (90 aa). Position 7 (N7) interacts with Fe cation. Heme is bound by residues 22–29 and H77; that span reads RFYTRHGI.

Belongs to the antibiotic biosynthesis monooxygenase family. Heme-degrading monooxygenase IsdG subfamily. Homodimer.

The protein resides in the cytoplasm. It carries out the reaction heme b + 5 AH2 + 4 O2 + 2 H(+) = delta-staphylobilin + Fe(2+) + formaldehyde + 5 A + 4 H2O. The catalysed reaction is heme b + 5 AH2 + 4 O2 + 2 H(+) = beta-staphylobilin + Fe(2+) + formaldehyde + 5 A + 4 H2O. In terms of biological role, allows bacterial pathogens to use the host heme as an iron source. Catalyzes the oxidative degradation of the heme macrocyclic porphyrin ring to the oxo-bilirubin chromophore staphylobilin (a mixture of the linear tetrapyrroles 5-oxo-delta-bilirubin and 15-oxo-beta-bilirubin) in the presence of a suitable electron donor such as ascorbate or NADPH--cytochrome P450 reductase, with subsequent release of free iron. The chain is Heme oxygenase (staphylobilin-producing) (isdG) from Staphylococcus aureus (strain bovine RF122 / ET3-1).